Consider the following 574-residue polypeptide: uncharacterized protein (574 aa).

11 consecutive transmembrane segments (helical) span residues 14-34 (FFPT…LFFG), 54-74 (VVPL…LGIV), 124-144 (WLMA…SDTA), 205-225 (ICKC…TGTI), 253-273 (SWMA…WFIV), 323-343 (LVIF…VIPG), 350-370 (KGYV…FIWP), 403-423 (FPWS…AVRV), 441-461 (MPFF…TEFS), 485-505 (PLYF…LPMA), and 520-540 (MIDM…ITAI). N-linked (GlcNAc...) asparagine glycans are attached at residues Asn-565 and Asn-569.

This sequence belongs to the SLC13A/DASS transporter (TC 2.A.47) family. NADC subfamily.

It localises to the membrane. This is an uncharacterized protein from Caenorhabditis elegans.